A 689-amino-acid chain; its full sequence is Acyl-coenzyme A oxidase 1 (689 aa).

Residues threonine 149 and glycine 188 each coordinate FAD. Glutamate 444 (proton acceptor) is an active-site residue.

Belongs to the acyl-CoA oxidase family. In terms of assembly, heteropentamer composed of five different subunits. FAD is required as a cofactor.

It localises to the peroxisome. It carries out the reaction a 2,3-saturated acyl-CoA + O2 = a (2E)-enoyl-CoA + H2O2. It functions in the pathway lipid metabolism; peroxisomal fatty acid beta-oxidation. This Yarrowia lipolytica (strain CLIB 122 / E 150) (Yeast) protein is Acyl-coenzyme A oxidase 1 (POX1).